The sequence spans 549 residues: Undecaprenyl phosphate-alpha-4-amino-4-deoxy-L-arabinose arabinosyl transferase 1 (549 aa).

12 helical membrane-spanning segments follow: residues 9–29, 80–102, 112–132, 133–153, 176–196, 204–224, 257–277, 290–310, 312–332, 342–362, 377–397, and 402–422; these read LLLI…GLWI, LFGV…YLLA, SLAS…AGYA, NLDP…WFTF, FMTK…PYAI, LLIY…PWAL, WWYY…LLPA, SSGF…LSKG, LPAY…NTLV, LLAF…LALV, HLVL…LQAM, and LWAA…AALP.

It belongs to the glycosyltransferase 83 family.

It is found in the cell inner membrane. The catalysed reaction is 4-amino-4-deoxy-alpha-L-arabinopyranosyl di-trans,octa-cis-undecaprenyl phosphate + lipid IVA = lipid IIA + di-trans,octa-cis-undecaprenyl phosphate.. The protein operates within lipopolysaccharide metabolism; 4-amino-4-deoxy-beta-L-arabinose-lipid A biosynthesis. Functionally, catalyzes the transfer of the L-Ara4N moiety of the glycolipid undecaprenyl phosphate-alpha-L-Ara4N to lipid A. The modified arabinose is attached to lipid A and is required for resistance to polymyxin and cationic antimicrobial peptides. The polypeptide is Undecaprenyl phosphate-alpha-4-amino-4-deoxy-L-arabinose arabinosyl transferase 1 (Pseudomonas fluorescens (strain ATCC BAA-477 / NRRL B-23932 / Pf-5)).